Reading from the N-terminus, the 364-residue chain is Cobalt-precorrin-5B C(1)-methyltransferase (364 aa).

The protein belongs to the CbiD family.

The enzyme catalyses Co-precorrin-5B + S-adenosyl-L-methionine = Co-precorrin-6A + S-adenosyl-L-homocysteine. Its pathway is cofactor biosynthesis; adenosylcobalamin biosynthesis; cob(II)yrinate a,c-diamide from sirohydrochlorin (anaerobic route): step 6/10. In terms of biological role, catalyzes the methylation of C-1 in cobalt-precorrin-5B to form cobalt-precorrin-6A. The polypeptide is Cobalt-precorrin-5B C(1)-methyltransferase (Pseudomonas putida (strain ATCC 700007 / DSM 6899 / JCM 31910 / BCRC 17059 / LMG 24140 / F1)).